Consider the following 333-residue polypeptide: MKNSLKMKNLLPALVITMAMSAVMSLCIAPNAYASKWDAKMTPEQVEATLDKKFAEGNYSPKGADSCLMCHKKSEKVMDLFKGVHGAIDSSKSPMAGLQCEACHGPLGQHNKGGNEPMITFGKQSTLSAEKQNSVCMSCHQDDKRVSWNGSHHDNADVACASCHQVHVAKDPVLSKNTEMEVCTSCHTKQKADMNKRSSHPLKWAQMTCSDCHNPHGSMTDSDLNKPSINETCYSCHAEKRGPKLWEHAPVTENCVTCHNPHGSVNDAMLKTRAPQLCQQCHASDGHASNAYLGNTGLGSNVGDNAFTGGRSCLNCHSQVHGSNHPSGKLLQR.

Positions 1–34 are cleaved as a signal peptide; sequence MKNSLKMKNLLPALVITMAMSAVMSLCIAPNAYA.

In Shewanella baltica (strain OS185), this protein is Multiheme cytochrome MtrA (mtrA).